The chain runs to 299 residues: UTP--glucose-1-phosphate uridylyltransferase (299 aa).

Belongs to the UDPGP type 2 family.

The enzyme catalyses alpha-D-glucose 1-phosphate + UTP + H(+) = UDP-alpha-D-glucose + diphosphate. The protein operates within carbohydrate metabolism; nucleotide-sugar metabolism. It participates in capsule biogenesis; capsule polysaccharide biosynthesis. The chain is UTP--glucose-1-phosphate uridylyltransferase (cap4C) from Streptococcus pneumoniae serotype 4 (strain ATCC BAA-334 / TIGR4).